The sequence spans 449 residues: SWI/SNF chromatin-remodeling accessory subunit 2 (449 aa).

Positions 1–11 (MHSQQRPNPQM) are enriched in polar residues. The disordered stretch occupies residues 1–56 (MHSQQRPNPQMNRHPYGTPGSAPQMRRPGGFAGQPPQMHGPRMVAPPAAPLPKKKK). Positions 223 to 300 (NHPAKFKLHP…PNKLHQLLQQ (78 aa)) constitute an SWIB/MDM2 domain.

It belongs to the SMARCD family. As to quaternary structure, component of the multiprotein chromatin-remodeling complexes SWI/SNF: SWI/SNF-A (BAF), SWI/SNF-B (PBAF) and related complexes. The canonical complex contains a catalytic subunit swsn-4, core subunits swsn-1 and swsn-5, and accessory subunits swsn-3, swsn-6, phf-10, dpff-1, swsn-9 and either ham-3/swsn-2.1 or swsn-2.2.

The protein localises to the nucleus. The protein resides in the nucleoplasm. Its subcellular location is the chromosome. It localises to the nucleus envelope. Functionally, involved in transcriptional activation and repression of select genes by chromatin remodeling (alteration of DNA-nucleosome topology). Component of SWI/SNF chromatin remodeling complexes that carry out key enzymatic activities, changing chromatin structure by altering DNA-histone contacts within a nucleosome in an ATP-dependent manner. Probably regulates vulva development through the let-60/Ras pathway. Involved in nuclear reassembly after mitosis and recruitment of nuclear envelope protein, mel-28, to the nuclear periphery in the early embryo and in the adult germline. Involved in gonadogenesis. The sequence is that of SWI/SNF chromatin-remodeling accessory subunit 2 from Caenorhabditis elegans.